A 456-amino-acid chain; its full sequence is Putative F-box/LRR-repeat protein At3g18150 (456 aa).

The 49-residue stretch at 30-78 (VDSISSLPDVILQHILSFIPTKLAITTSLLSKRWRHVWCDTPSLSFNDY) folds into the F-box domain. 6 LRR repeats span residues 177–202 (TCLL…TLDH), 203–213 (CGGLRVLDLSK), 228–253 (VPEL…KLPC), 278–303 (KADF…TLGG), 333–358 (IFQY…TLLT), and 396–422 (CLDV…DKMV).

In Arabidopsis thaliana (Mouse-ear cress), this protein is Putative F-box/LRR-repeat protein At3g18150.